Here is a 520-residue protein sequence, read N- to C-terminus: Poly(A)-specific ribonuclease PNLDC1 (520 aa).

Mg(2+) is bound by residues Asp17, Glu19, Asp260, and Asp354. Residues 497-513 (CLLQVCGIVTAWALLAF) form a helical membrane-spanning segment.

Belongs to the CAF1 family. It depends on Mg(2+) as a cofactor.

It is found in the endoplasmic reticulum membrane. It carries out the reaction Exonucleolytic cleavage of poly(A) to 5'-AMP.. In terms of biological role, 3'-exoribonuclease that has a preference for poly(A) tails of mRNAs, thereby efficiently degrading poly(A) tails. Exonucleolytic degradation of the poly(A) tail is often the first step in the decay of eukaryotic mRNAs and is also used to silence certain maternal mRNAs translationally during oocyte maturation and early embryonic development. May act as a regulator of multipotency in embryonic stem cells. Is a critical factor for proper spermatogenesis, involved in pre-piRNAs processing to generate mature piRNAs. This Pongo abelii (Sumatran orangutan) protein is Poly(A)-specific ribonuclease PNLDC1.